The sequence spans 333 residues: Casein kinase II subunit alpha-2 (333 aa).

Positions tyrosine 34–phenylalanine 319 constitute a Protein kinase domain. Residues valine 40–valine 48 and lysine 63 each bind ATP. Aspartate 151 acts as the Proton acceptor in catalysis.

This sequence belongs to the protein kinase superfamily. Ser/Thr protein kinase family. CK2 subfamily. In terms of assembly, monomer. Autophosphorylated.

The protein localises to the cytoplasm. It carries out the reaction L-seryl-[protein] + ATP = O-phospho-L-seryl-[protein] + ADP + H(+). The catalysed reaction is L-threonyl-[protein] + ATP = O-phospho-L-threonyl-[protein] + ADP + H(+). In terms of biological role, casein kinases are operationally defined by their preferential utilization of acidic proteins such as caseins as substrates. It can phosphorylate a large number of proteins. Involved in photoperiod sensitivity (PS). Increases days-to-heading under natural day (ND) and long day (LD) conditions, but not under short day (SD) conditions. This is Casein kinase II subunit alpha-2 from Oryza sativa subsp. indica (Rice).